The primary structure comprises 1432 residues: Gag-Pol polyprotein (1432 aa).

A lipid anchor (N-myristoyl glycine; by host) is attached at Gly-2. The interaction with Gp41 stretch occupies residues 7–31 (VLSGGKLDTWERIRLRPGGKKKYAL). The interval 8 to 43 (LSGGKLDTWERIRLRPGGKKKYALKHLIWASRELER) is interaction with host CALM1. The segment at 12-19 (KLDTWERI) is interaction with host AP3D1. Positions 14-33 (DTWERIRLRPGGKKKYALKH) are interaction with membrane phosphatidylinositol 4,5-bisphosphate and RNA. The short motif at 16-22 (WERIRLR) is the Nuclear export signal element. Positions 26–32 (KKKYALK) match the Nuclear localization signal motif. The tract at residues 73 to 77 (EEIRS) is interaction with membrane phosphatidylinositol 4,5-bisphosphate. Residues 102–125 (EKMEEEQNKSKKKTQQAAADSSQV) are disordered. Residues 116–125 (QQAAADSSQV) are compositionally biased toward low complexity. A Phosphotyrosine; by host modification is found at Tyr-129. The tract at residues 186–224 (NTVGGHQAAMQMLKETINDEAAEWDRLHPVHAGPVAPGQ) is interaction with human PPIA/CYPA and NUP153. A dimerization/Multimerization of capsid protein p24 region spans residues 274 to 360 (YSPVSILDIR…GGPGHKARVL (87 aa)). CCHC-type zinc fingers lie at residues 388-405 (IKCFNCGKEGHTAKNCRA) and 409-426 (KGCWKCGREGHQMKDCTE). The tract at residues 486–490 (PQITL) is dimerization of protease. Positions 505-574 (KEALLDTGAD…TPVNIIGRNL (70 aa)) constitute a Peptidase A2 domain. Asp-510 functions as the For protease activity; shared with dimeric partner in the catalytic mechanism. 2 dimerization of protease regions span residues 534–540 (GIGGFIK) and 573–585 (NLLTQIGCTLNFP). A Reverse transcriptase domain is found at 628 to 818 (EGKISRIGPE…PPFLWMGYEL (191 aa)). Mg(2+)-binding residues include Asp-694, Asp-769, and Asp-770. Positions 811–819 (FLWMGYELH) are RT 'primer grip'. The Tryptophan repeat motif signature appears at 982 to 998 (WETWWIEYWQATWIPEW). In terms of domain architecture, RNase H type-1 spans 1018 to 1141 (IIGAETFYVD…VDKLVSQGIR (124 aa)). Residues Asp-1027, Glu-1062, Asp-1082, and Asp-1133 each coordinate Mg(2+). An Integrase-type zinc finger spans residues 1147-1188 (DGIDKAQEEHEKYHNNWRAMASDFNLPPVVAKEIVASCDKCQ). Residues His-1156, His-1160, Cys-1184, and Cys-1187 each contribute to the Zn(2+) site. In terms of domain architecture, Integrase catalytic spans 1198-1348 (VDCSPGIWQL…SAGERIIDII (151 aa)). Mg(2+) is bound by residues Asp-1208, Asp-1260, and Glu-1296. The segment at residues 1367–1414 (FRVYYRDSRDPIWKGPAKLLWKGEGAVVIQDNSDIKVVPRRKVKIIRD) is a DNA-binding region (integrase-type).

Homotrimer; further assembles as hexamers of trimers. Interacts with gp41 (via C-terminus). Interacts with host CALM1; this interaction induces a conformational change in the Matrix protein, triggering exposure of the myristate group. Interacts with host AP3D1; this interaction allows the polyprotein trafficking to multivesicular bodies during virus assembly. Part of the pre-integration complex (PIC) which is composed of viral genome, matrix protein, Vpr and integrase. In terms of assembly, homodimer; the homodimer further multimerizes as homohexamers or homopentamers. Interacts with human PPIA/CYPA; This interaction stabilizes the capsid. Interacts with human NUP153. Interacts with host PDZD8; this interaction stabilizes the capsid. Interacts with monkey TRIM5; this interaction destabilizes the capsid. As to quaternary structure, homodimer, whose active site consists of two apposed aspartic acid residues. Heterodimer of p66 RT and p51 RT (RT p66/p51). Heterodimerization of RT is essential for DNA polymerase activity. The overall folding of the subdomains is similar in p66 RT and p51 RT but the spatial arrangements of the subdomains are dramatically different. In terms of assembly, homotetramer; may further associate as a homohexadecamer. Part of the pre-integration complex (PIC) which is composed of viral genome, matrix protein, Vpr and integrase. Interacts with human SMARCB1/INI1 and human PSIP1/LEDGF isoform 1. Interacts with human KPNA3; this interaction might play a role in nuclear import of the pre-integration complex. Interacts with human NUP153; this interaction might play a role in nuclear import of the pre-integration complex. It depends on Mg(2+) as a cofactor. In terms of processing, specific enzymatic cleavages by the viral protease yield mature proteins. The protease is released by autocatalytic cleavage. The polyprotein is cleaved during and after budding, this process is termed maturation. Proteolytic cleavage of p66 RT removes the RNase H domain to yield the p51 RT subunit. Nucleocapsid protein p7 might be further cleaved after virus entry. Post-translationally, tyrosine phosphorylated presumably in the virion by a host kinase. Phosphorylation is apparently not a major regulator of membrane association. Phosphorylated possibly by host MAPK1; this phosphorylation is necessary for Pin1-mediated virion uncoating. In terms of processing, methylated by host PRMT6, impairing its function by reducing RNA annealing and the initiation of reverse transcription.

It localises to the host cell membrane. The protein resides in the host endosome. It is found in the host multivesicular body. The protein localises to the virion membrane. Its subcellular location is the host nucleus. It localises to the host cytoplasm. The protein resides in the virion. It carries out the reaction Specific for a P1 residue that is hydrophobic, and P1' variable, but often Pro.. It catalyses the reaction Endohydrolysis of RNA in RNA/DNA hybrids. Three different cleavage modes: 1. sequence-specific internal cleavage of RNA. Human immunodeficiency virus type 1 and Moloney murine leukemia virus enzymes prefer to cleave the RNA strand one nucleotide away from the RNA-DNA junction. 2. RNA 5'-end directed cleavage 13-19 nucleotides from the RNA end. 3. DNA 3'-end directed cleavage 15-20 nucleotides away from the primer terminus.. The catalysed reaction is 3'-end directed exonucleolytic cleavage of viral RNA-DNA hybrid.. The enzyme catalyses DNA(n) + a 2'-deoxyribonucleoside 5'-triphosphate = DNA(n+1) + diphosphate. With respect to regulation, the viral protease is inhibited by many synthetic protease inhibitors (PIs), such as amprenavir, atazanavir, indinavir, loprinavir, nelfinavir, ritonavir and saquinavir. RT can be inhibited either by nucleoside RT inhibitors (NRTIs) or by non nucleoside RT inhibitors (NNRTIs). NRTIs act as chain terminators, whereas NNRTIs inhibit DNA polymerization by binding a small hydrophobic pocket near the RT active site and inducing an allosteric change in this region. Classical NRTIs are abacavir, adefovir (PMEA), didanosine (ddI), lamivudine (3TC), stavudine (d4T), tenofovir (PMPA), zalcitabine (ddC), and zidovudine (AZT). Classical NNRTIs are atevirdine (BHAP U-87201E), delavirdine, efavirenz (DMP-266), emivirine (I-EBU), and nevirapine (BI-RG-587). The tritherapies used as a basic effective treatment of AIDS associate two NRTIs and one NNRTI. Use of protease inhibitors in tritherapy regimens permit more ambitious therapeutic strategies. Its function is as follows. Gag-Pol polyprotein and Gag polyprotein may regulate their own translation, by the binding genomic RNA in the 5'-UTR. At low concentration, Gag-Pol and Gag would promote translation, whereas at high concentration, the polyproteins encapsidate genomic RNA and then shut off translation. In terms of biological role, matrix protein p17 targets Gag and Gag-pol polyproteins to the plasma membrane via a multipartite membrane-binding signal, that includes its myristoylated N-terminus. Matrix protein is part of the pre-integration complex. Implicated in the release from host cell mediated by Vpu. Binds to RNA. Functionally, forms the conical core that encapsulates the genomic RNA-nucleocapsid complex in the virion. Most core are conical, with only 7% tubular. The core is constituted by capsid protein hexamer subunits. The core is disassembled soon after virion entry. Host restriction factors such as TRIM5-alpha or TRIMCyp bind retroviral capsids and cause premature capsid disassembly, leading to blocks in reverse transcription. Capsid restriction by TRIM5 is one of the factors which restricts HIV-1 to the human species. Host PIN1 apparently facilitates the virion uncoating. On the other hand, interactions with PDZD8 or CYPA stabilize the capsid. Nucleocapsid protein p7 encapsulates and protects viral dimeric unspliced genomic RNA (gRNA). Binds these RNAs through its zinc fingers. Acts as a nucleic acid chaperone which is involved in rearangement of nucleic acid secondary structure during gRNA retrotranscription. Also facilitates template switch leading to recombination. As part of the polyprotein, participates in gRNA dimerization, packaging, tRNA incorporation and virion assembly. Its function is as follows. The aspartyl protease mediates proteolytic cleavages of Gag and Gag-Pol polyproteins during or shortly after the release of the virion from the plasma membrane. Cleavages take place as an ordered, step-wise cascade to yield mature proteins. This process is called maturation. Displays maximal activity during the budding process just prior to particle release from the cell. Also cleaves Nef and Vif, probably concomitantly with viral structural proteins on maturation of virus particles. Hydrolyzes host EIF4GI and PABP1 in order to shut off the capped cellular mRNA translation. The resulting inhibition of cellular protein synthesis serves to ensure maximal viral gene expression and to evade host immune response. Also mediates cleavage of host YTHDF3. Mediates cleavage of host CARD8, thereby activating the CARD8 inflammasome, leading to the clearance of latent HIV-1 in patient CD4(+) T-cells after viral reactivation; in contrast, HIV-1 can evade CARD8-sensing when its protease remains inactive in infected cells prior to viral budding. In terms of biological role, reverse transcriptase/ribonuclease H (RT) is a multifunctional enzyme that converts the viral RNA genome into dsDNA in the cytoplasm, shortly after virus entry into the cell. This enzyme displays a DNA polymerase activity that can copy either DNA or RNA templates, and a ribonuclease H (RNase H) activity that cleaves the RNA strand of RNA-DNA heteroduplexes in a partially processive 3' to 5' endonucleasic mode. Conversion of viral genomic RNA into dsDNA requires many steps. A tRNA(3)-Lys binds to the primer-binding site (PBS) situated at the 5'-end of the viral RNA. RT uses the 3' end of the tRNA primer to perform a short round of RNA-dependent minus-strand DNA synthesis. The reading proceeds through the U5 region and ends after the repeated (R) region which is present at both ends of viral RNA. The portion of the RNA-DNA heteroduplex is digested by the RNase H, resulting in a ssDNA product attached to the tRNA primer. This ssDNA/tRNA hybridizes with the identical R region situated at the 3' end of viral RNA. This template exchange, known as minus-strand DNA strong stop transfer, can be either intra- or intermolecular. RT uses the 3' end of this newly synthesized short ssDNA to perform the RNA-dependent minus-strand DNA synthesis of the whole template. RNase H digests the RNA template except for two polypurine tracts (PPTs) situated at the 5'-end and near the center of the genome. It is not clear if both polymerase and RNase H activities are simultaneous. RNase H probably can proceed both in a polymerase-dependent (RNA cut into small fragments by the same RT performing DNA synthesis) and a polymerase-independent mode (cleavage of remaining RNA fragments by free RTs). Secondly, RT performs DNA-directed plus-strand DNA synthesis using the PPTs that have not been removed by RNase H as primers. PPTs and tRNA primers are then removed by RNase H. The 3' and 5' ssDNA PBS regions hybridize to form a circular dsDNA intermediate. Strand displacement synthesis by RT to the PBS and PPT ends produces a blunt ended, linear dsDNA copy of the viral genome that includes long terminal repeats (LTRs) at both ends. Functionally, catalyzes viral DNA integration into the host chromosome, by performing a series of DNA cutting and joining reactions. This enzyme activity takes place after virion entry into a cell and reverse transcription of the RNA genome in dsDNA. The first step in the integration process is 3' processing. This step requires a complex comprising the viral genome, matrix protein, Vpr and integrase. This complex is called the pre-integration complex (PIC). The integrase protein removes 2 nucleotides from each 3' end of the viral DNA, leaving recessed CA OH's at the 3' ends. In the second step, the PIC enters cell nucleus. This process is mediated through integrase and Vpr proteins, and allows the virus to infect a non dividing cell. This ability to enter the nucleus is specific of lentiviruses, other retroviruses cannot and rely on cell division to access cell chromosomes. In the third step, termed strand transfer, the integrase protein joins the previously processed 3' ends to the 5' ends of strands of target cellular DNA at the site of integration. The 5'-ends are produced by integrase-catalyzed staggered cuts, 5 bp apart. A Y-shaped, gapped, recombination intermediate results, with the 5'-ends of the viral DNA strands and the 3' ends of target DNA strands remaining unjoined, flanking a gap of 5 bp. The last step is viral DNA integration into host chromosome. This involves host DNA repair synthesis in which the 5 bp gaps between the unjoined strands are filled in and then ligated. Since this process occurs at both cuts flanking the HIV genome, a 5 bp duplication of host DNA is produced at the ends of HIV-1 integration. Alternatively, Integrase may catalyze the excision of viral DNA just after strand transfer, this is termed disintegration. This Homo sapiens (Human) protein is Gag-Pol polyprotein (gag-pol).